Consider the following 80-residue polypeptide: MGVKGQLLQDPFLNVLRKEHIPVSIYLVNGIKLQGHIDSFDQYVVLLRNSVTQMVYKHAISTIVPGKAVSIPVPAETLPE.

Residues 10–69 (DPFLNVLRKEHIPVSIYLVNGIKLQGHIDSFDQYVVLLRNSVTQMVYKHAISTIVPGKAV) form the Sm domain.

The protein belongs to the Hfq family. In terms of assembly, homohexamer.

Functionally, RNA chaperone that binds small regulatory RNA (sRNAs) and mRNAs to facilitate mRNA translational regulation in response to envelope stress, environmental stress and changes in metabolite concentrations. Also binds with high specificity to tRNAs. In Nitrosomonas eutropha (strain DSM 101675 / C91 / Nm57), this protein is RNA-binding protein Hfq.